The primary structure comprises 40 residues: Muscarinic m1-toxin4 (40 aa).

An intrachain disulfide couples C3 to C24.

The protein belongs to the three-finger toxin family. Short-chain subfamily. Aminergic toxin sub-subfamily. In terms of assembly, monomer. In terms of processing, contains 4 disulfide bonds. In terms of tissue distribution, expressed by the venom gland.

The protein resides in the secreted. Functionally, binds irreversibly and specifically to M1 (CHRM1) muscarinic acetylcholine receptors, blocking further binding of antagonists and preventing the action of agonists. This is Muscarinic m1-toxin4 from Dendroaspis angusticeps (Eastern green mamba).